The sequence spans 361 residues: Probable dual-specificity RNA methyltransferase RlmN (361 aa).

Catalysis depends on glutamate 91, which acts as the Proton acceptor. The region spanning 97-329 (QHYGLSVCVT…KKKGVNCVVR (233 aa)) is the Radical SAM core domain. A disulfide bridge connects residues cysteine 104 and cysteine 340. Cysteine 111, cysteine 115, and cysteine 118 together coordinate [4Fe-4S] cluster. S-adenosyl-L-methionine-binding positions include 163–164 (GE), serine 195, 218–220 (SLH), and asparagine 296. Cysteine 340 functions as the S-methylcysteine intermediate in the catalytic mechanism.

The protein belongs to the radical SAM superfamily. RlmN family. [4Fe-4S] cluster serves as cofactor.

Its subcellular location is the cytoplasm. The catalysed reaction is adenosine(2503) in 23S rRNA + 2 reduced [2Fe-2S]-[ferredoxin] + 2 S-adenosyl-L-methionine = 2-methyladenosine(2503) in 23S rRNA + 5'-deoxyadenosine + L-methionine + 2 oxidized [2Fe-2S]-[ferredoxin] + S-adenosyl-L-homocysteine. The enzyme catalyses adenosine(37) in tRNA + 2 reduced [2Fe-2S]-[ferredoxin] + 2 S-adenosyl-L-methionine = 2-methyladenosine(37) in tRNA + 5'-deoxyadenosine + L-methionine + 2 oxidized [2Fe-2S]-[ferredoxin] + S-adenosyl-L-homocysteine. Its function is as follows. Specifically methylates position 2 of adenine 2503 in 23S rRNA and position 2 of adenine 37 in tRNAs. This Streptococcus pneumoniae serotype 19F (strain G54) protein is Probable dual-specificity RNA methyltransferase RlmN.